Here is a 963-residue protein sequence, read N- to C-terminus: MERREEQPGAAGAGAAPALDFTVENVEKALHQLYYDPNIENKNLAQKWLMQAQVSPQAWHFSWQLLQPDKVPEIQYFGASALHIKISRYWSDIPTDQYESLKAQLFTQITRFASGSKIVLTRLCVALASLALSMMPDAWPCAVADMVRLFQAEDSPVDGQGRCLALLELLTVLPEEFQTSRLPQYRKGLVRTSLAVECGAVFPLLEQLLQQPSSPSCVRQKVLKCFSSWVQLEVPLQDCEALIQAAFAALQDSELFDSSVEAIVNAISQPDAQRYVNTLLKLIPLVLGLQEQLRQAVQNGDMETSHGICRIAVALGENHSRALLDQVEHWQSFLALVNMIMFCTGIPGHYPVNETTSSLTLTFWYTLQDDILSFEAEKQAVYQQVYRPVYFQLVDVLLHKAQFPSDEEYGFWSSDEKEQFRIYRVDISDTLMYVYEMLGAELLSNLYDKLGRLLTSSEEPYSWQHTEALLYGFQSIAETIDVNYSDVVPGLIGLIPRISISNVQLADTVMFTIGALSEWLADHPVMINSVLPLVLHALGNPELSVSSVSTLKKICRECKYDLPPYAANIVAVSQDVLMKQIHKTSQCMWLMQALGFLLSALQVEEILKNLHSLISPYIQQLEKLAEEIPNPSNKLAIVHILGLLSNLFTTLDISHHEDDHEGPELRKLPVPQGPNPVVVVLQQVFQLIQKVLSKWLNDAQVVEAVCAIFEKSVKTLLDDFAPMVPQLCEMLGRMYSTIPQASALDLTRQLVHIFAHEPAHFPPIEALFLLVTSVTLTLFQQGPRDHPDIVDSFMQLLAQALKRKPDLFLCERLDVKAVFQCAVLALKFPEAPTVKASCGFFTELLPRCGEVESVGKVVQEDGRMLLIAVLEAIGGQASRSLMDCFADILFALNKHCFSLLSMWIKEALQPPGFPSARLSPEQKDTFSQQILRERVNKRRVKEMVKEFTLLCRGLHGTDYTADY.

HEAT repeat units follow at residues 24–54 (ENVE…QAQV), 56–88 (PQAW…KISR), 95–135 (TDQY…LSMM), 142–179 (AVAD…EFQT), 194–231 (LAVE…SWVQ), 236–268 (LQDC…NAIS), 276–325 (VNTL…ALLD), 330–372 (WQSF…DDIL), 375–438 (EAEK…YEML), 440–476 (AELL…FQSI), 487–522 (VVPG…WLAD), 524–558 (PVMI…CREC), 562–600 (LPPY…LLSA), 603–648 (VEEI…SNLF), 676–716 (PVVV…VKTL), 720–754 (FAPM…VHIF), 761–803 (FPPI…ALKR), 815–845 (VKAV…TELL), 860–893 (EDGR…FALN), and 897–931 (FSLL…QQIL). Residues 45 to 111 (AQKWLMQAQV…KAQLFTQITR (67 aa)) enclose the Importin N-terminal domain.

The protein belongs to the importin beta family. As to quaternary structure, interacts with UBC9, RAN, RBM8A, eIF-1A and PAX6. In terms of tissue distribution, expressed in fetal brain, heart, intestine and kidney.

The protein resides in the cytoplasm. The protein localises to the nucleus. Functionally, functions in nuclear protein import as nuclear transport receptor. Serves as receptor for nuclear localization signals (NLS) in cargo substrates. Is thought to mediate docking of the importin/substrate complex to the nuclear pore complex (NPC) through binding to nucleoporin and the complex is subsequently translocated through the pore by an energy requiring, Ran-dependent mechanism. At the nucleoplasmic side of the NPC, Ran binds to the importin, the importin/substrate complex dissociates and importin is re-exported from the nucleus to the cytoplasm where GTP hydrolysis releases Ran. The directionality of nuclear import is thought to be conferred by an asymmetric distribution of the GTP- and GDP-bound forms of Ran between the cytoplasm and nucleus. Mediates the nuclear import of UBC9, the RBM8A/MAGOH complex, PAX6 and probably other members of the paired homeobox family. Also mediates nuclear export of eIF-1A, and the cytoplasmic release of eIF-1A is triggered by the loading of import substrates onto IPO13. This is Importin-13 (IPO13) from Homo sapiens (Human).